Consider the following 23-residue polypeptide: QYVKDPDKQVVARIFLDLQLVQR.

It localises to the secreted. Its subcellular location is the cell wall. The chain is 48 kDa cell wall protein from Nicotiana tabacum (Common tobacco).